A 352-amino-acid chain; its full sequence is Ribosome biogenesis protein BRX1 homolog (352 aa).

Residues 1 to 55 (MGKFSKIKKVQEEESAHQKMEWEAAGAKDSSSDDSSDESDNDDQPKQATEETRKR) are disordered. A compositionally biased stretch (basic and acidic residues) spans 9–22 (KVQEEESAHQKMEW). The span at 32–42 (SDDSSDESDND) shows a compositional bias: acidic residues. Residues 43-55 (DQPKQATEETRKR) are compositionally biased toward basic and acidic residues. Residues 63–253 (ERVLVLCSRG…MVRLFAGSFE (191 aa)) form the Brix domain.

It belongs to the BRX1 family.

It localises to the nucleus. Its subcellular location is the nucleolus. Required for biogenesis of the 60S ribosomal subunit. This Caenorhabditis elegans protein is Ribosome biogenesis protein BRX1 homolog.